We begin with the raw amino-acid sequence, 77 residues long: P fimbrial regulatory protein KS71A (77 aa).

This is P fimbrial regulatory protein KS71A (KS71A) from Escherichia coli.